A 1068-amino-acid polypeptide reads, in one-letter code: MVSSDRPVSLEDEVSHSMKEMIGGCCVCSDERGWAENPLVYCDGHGCSVAVHQACYGIVQVPTGPWFCRKCESQERAARVRCELCPHKDGALKRTDNGGWAHVVCALYIPEVQFANVSTMEPIVLQSVPHDRYNKTCYICDEQGRESKAATGACMTCNKHGCRQAFHVTCAQFAGLLCEEEGNGADNVQYCGYCKYHFSKLKKSKRGSNRSYEQSLSDSSSHSQDKHHEKEKKKYKEKDKHKQKHKKQPEPSPALVPSLTVTTEKTYTSTSNNSISGSLKRLEDTAARFTNANFQEVSAHTSSGKDVSEARGSEGKGKKSSAHSSGQRGRKPGAGRNPGTAVSASSPFPQGSFSGTPGSVKSSSGSSVQSPQDFLSFTDSDLRSDSYTHTQQPSSTKDVHKGESGSQEAAVNSFSSLVGHPVTSTVISQPKSFDNSPGELGSSSLPTAGYKRAQTSGIEEEAVKEKKRKGNKQSKHGPGRPKGNKNQENVSHLSVSSASPTSSVASAAGSVTSSSLQKSPTLLRNGSLQSLSVGSSPVGSEISMQYRHDGACPTTTFSELLNAIHNGIYNSNDVAVSFPNVVSGSGSSTPVSSSHIPQQSSGHLQQVGALSPSAASSVTPAAATTQANTVSGSSLSQAPAHMYGSRLNQNPSMAVLIAQSESSQTDQDLGDNARSLGGRGSSPRGSLSPRSPVSNLQLRYDQPSNSSLETVPPVAASIEQLLERQWSEGQQFLLEQGTPGDILGMLKSLHQLQVENRRLEEQIKNLTAKKERLQLLNAQLSVPFPAITTNPSPSHQMHTYTAQTAPPPDSLNSSKSPHIGNSFLPDNSLPVLNQDLTSSGQSTSSSSALSTPPPAGQSPAQQSSGVSGVQQVNGVTVGALASGMQTVTSTIPAVSAVGGIIGALPGNQLAINGIVGALNGVIQTPVTISQNPAPLTHTSVPPNAAHPMPAAALTNSASGLGLLSDQQRQMFIQQQQFQQLLNSQQLTPEQHQAFLYQLMQQQHHPPELQQLQLPGPTQIPINNLLAGAQAPPLHTATTNPFLTIHGDSTSQKVTRLSDKTGPVAQEKS.

Residues 22-74 (IGGCCVCSDERGWAENPLVYCDGHGCSVAVHQACYGIVQVPTGPWFCRKCESQ) form a PHD-type 1 zinc finger. A C2HC pre-PHD-type zinc finger spans residues 79–112 (RVRCELCPHKDGALKRTDNGGWAHVVCALYIPEV). Residues 106–190 (ALYIPEVQFA…EGNGADNVQY (85 aa)) form a required for interaction with histone H3 region. The PHD-type 2 zinc-finger motif lies at 135 to 198 (KTCYICDEQG…QYCGYCKYHF (64 aa)). The tract at residues 207–260 (GSNRSYEQSLSDSSSHSQDKHHEKEKKKYKEKDKHKQKHKKQPEPSPALVPSLT) is disordered. Serine 217 is modified (phosphoserine). Positions 223–240 (SQDKHHEKEKKKYKEKDK) are enriched in basic and acidic residues. The residue at position 252 (serine 252) is a Phosphoserine. Lysine 280 is covalently cross-linked (Glycyl lysine isopeptide (Lys-Gly) (interchain with G-Cter in SUMO2)). Residues 296 to 305 (EVSAHTSSGK) are compositionally biased toward polar residues. Disordered stretches follow at residues 296 to 416 (EVSA…SFSS) and 428 to 506 (SQPK…SVAS). Basic and acidic residues predominate over residues 306 to 317 (DVSEARGSEGKG). A compositionally biased stretch (polar residues) spans 340-351 (TAVSASSPFPQG). Positions 352–372 (SFSGTPGSVKSSSGSSVQSPQ) are enriched in low complexity. Polar residues-rich tracts occupy residues 387–396 (YTHTQQPSST), 404–416 (SGSQ…SFSS), and 428–446 (SQPK…SSLP). Position 436 is a phosphoserine (serine 436). Residues 465 to 483 (EKKRKGNKQSKHGPGRPKG) show a composition bias toward basic residues. Residues 490–506 (VSHLSVSSASPTSSVAS) show a composition bias toward low complexity. The residue at position 532 (serine 532) is a Phosphoserine. Residues 583–594 (SGSGSSTPVSSS) are compositionally biased toward low complexity. 2 disordered regions span residues 583–613 (SGSG…LSPS) and 660–698 (SESS…NLQL). Residues 595 to 604 (HIPQQSSGHL) show a composition bias toward polar residues. Positions 681 to 692 (SSPRGSLSPRSP) are enriched in low complexity. Phosphoserine is present on residues serine 686, serine 688, and serine 691. Residues 752–780 (LQVENRRLEEQIKNLTAKKERLQLLNAQL) form a leucine-zipper region. Disordered stretches follow at residues 786-869 (AITT…VSGV) and 1040-1068 (PFLT…QEKS). Positions 787–816 (ITTNPSPSHQMHTYTAQTAPPPDSLNSSKS) are enriched in polar residues. 2 stretches are compositionally biased toward low complexity: residues 836-850 (LTSS…SALS) and 857-869 (QSPA…VSGV). The span at 1040 to 1054 (PFLTIHGDSTSQKVT) shows a compositional bias: polar residues.

In terms of assembly, self-associates. Interacts with FSTL3; the interaction enhances MLLT10 in vitro transcriptional activity and self-association. Interacts with YEATS4. Interacts with SS18. Interacts with DOT1L. Interacts with histone H3; interaction is necessary for MLLT10 binding to nucleosomes; interaction is inhibited by histone H3 'Lys-27' methylations (H3K27me1, H3K27me2 and H3K27me3) amd acetylation; interaction stabilizes association of MLLT10 at chromatin; interaction is essential for histone H3 'Lys-79' dimethylation (H3K79me2).

The protein resides in the nucleus. Functionally, probably involved in transcriptional regulation. Binds to cruciform DNA. In cells, binding to unmodified histone H3 regulates DOT1L functions including histone H3 'Lys-79' dimethylation (H3K79me2) and gene activation. In Mus musculus (Mouse), this protein is Protein AF-10.